The chain runs to 136 residues: Large ribosomal subunit protein bL19 (136 aa).

It belongs to the bacterial ribosomal protein bL19 family.

Its function is as follows. This protein is located at the 30S-50S ribosomal subunit interface and may play a role in the structure and function of the aminoacyl-tRNA binding site. This Xylella fastidiosa (strain M23) protein is Large ribosomal subunit protein bL19.